The chain runs to 275 residues: NH(3)-dependent NAD(+) synthetase (275 aa).

Gly-46–Ser-53 contributes to the ATP binding site. Residue Asp-52 coordinates Mg(2+). Position 140 (Arg-140) interacts with deamido-NAD(+). An ATP-binding site is contributed by Thr-160. Glu-165 contributes to the Mg(2+) binding site. Lys-173 and Asp-180 together coordinate deamido-NAD(+). ATP contacts are provided by Lys-189 and Thr-211. Deamido-NAD(+) is bound at residue His-260–Lys-261.

It belongs to the NAD synthetase family. Homodimer.

The catalysed reaction is deamido-NAD(+) + NH4(+) + ATP = AMP + diphosphate + NAD(+) + H(+). The protein operates within cofactor biosynthesis; NAD(+) biosynthesis; NAD(+) from deamido-NAD(+) (ammonia route): step 1/1. Its function is as follows. Catalyzes the ATP-dependent amidation of deamido-NAD to form NAD. Uses ammonia as a nitrogen source. This is NH(3)-dependent NAD(+) synthetase from Escherichia coli O6:K15:H31 (strain 536 / UPEC).